We begin with the raw amino-acid sequence, 179 residues long: Pyridoxal 5'-phosphate synthase subunit PdxT (179 aa).

Position 48-50 (48-50) interacts with L-glutamine; sequence GES. Cys79 (nucleophile) is an active-site residue. Residues Arg101 and 127–128 contribute to the L-glutamine site; that span reads IR. Catalysis depends on charge relay system residues His163 and Glu165.

This sequence belongs to the glutaminase PdxT/SNO family. As to quaternary structure, in the presence of PdxS, forms a dodecamer of heterodimers. Only shows activity in the heterodimer.

It carries out the reaction aldehydo-D-ribose 5-phosphate + D-glyceraldehyde 3-phosphate + L-glutamine = pyridoxal 5'-phosphate + L-glutamate + phosphate + 3 H2O + H(+). The catalysed reaction is L-glutamine + H2O = L-glutamate + NH4(+). The protein operates within cofactor biosynthesis; pyridoxal 5'-phosphate biosynthesis. Functionally, catalyzes the hydrolysis of glutamine to glutamate and ammonia as part of the biosynthesis of pyridoxal 5'-phosphate. The resulting ammonia molecule is channeled to the active site of PdxS. The sequence is that of Pyridoxal 5'-phosphate synthase subunit PdxT from Francisella tularensis subsp. holarctica (strain FTNF002-00 / FTA).